The chain runs to 132 residues: Large ribosomal subunit protein uL14 (132 aa).

Belongs to the universal ribosomal protein uL14 family. Part of the 50S ribosomal subunit. Forms a cluster with proteins L3 and L24e, part of which may contact the 16S rRNA in 2 intersubunit bridges.

In terms of biological role, binds to 23S rRNA. Forms part of two intersubunit bridges in the 70S ribosome. The chain is Large ribosomal subunit protein uL14 from Methanosarcina acetivorans (strain ATCC 35395 / DSM 2834 / JCM 12185 / C2A).